The chain runs to 139 residues: Small ribosomal subunit protein eS6 (139 aa).

Belongs to the eukaryotic ribosomal protein eS6 family.

The protein is Small ribosomal subunit protein eS6 of Methanosarcina barkeri (strain Fusaro / DSM 804).